Reading from the N-terminus, the 225-residue chain is Cytidylate kinase (225 aa).

11-19 (GPAAAGKST) lines the ATP pocket.

The protein belongs to the cytidylate kinase family. Type 1 subfamily.

Its subcellular location is the cytoplasm. It carries out the reaction CMP + ATP = CDP + ADP. The enzyme catalyses dCMP + ATP = dCDP + ADP. The chain is Cytidylate kinase from Bacillus cytotoxicus (strain DSM 22905 / CIP 110041 / 391-98 / NVH 391-98).